The chain runs to 680 residues: Dihydroxyacetone phosphate acyltransferase (680 aa).

Residues Ser-12 and Ser-17 each carry the phosphoserine modification. Residues 162–167 (HRSYID) carry the HXXXXD motif motif. Position 643 is an N6-acetyllysine (Lys-643). The short motif at 678–680 (AKL) is the Microbody targeting signal element.

Belongs to the GPAT/DAPAT family. Part of a heterotrimeric complex composed of GNPAT, AGPS and a modified form of GNPAT.

It localises to the peroxisome membrane. The catalysed reaction is dihydroxyacetone phosphate + an acyl-CoA = a 1-acylglycerone 3-phosphate + CoA. It carries out the reaction dihydroxyacetone phosphate + hexadecanoyl-CoA = 1-hexadecanoylglycerone 3-phosphate + CoA. Its pathway is membrane lipid metabolism; glycerophospholipid metabolism. Dihydroxyacetonephosphate acyltransferase catalyzing the first step in the biosynthesis of plasmalogens, a subset of phospholipids that differ from other glycerolipids by having an alkyl chain attached through a vinyl ether linkage at the sn-1 position of the glycerol backbone, and which unique physical properties have an impact on various aspects of cell signaling and membrane biology. This Homo sapiens (Human) protein is Dihydroxyacetone phosphate acyltransferase.